A 371-amino-acid polypeptide reads, in one-letter code: Enterobactin C-glucosyltransferase (371 aa).

It belongs to the glycosyltransferase 28 family.

Its subcellular location is the cytoplasm. The enzyme catalyses enterobactin + UDP-alpha-D-glucose = monoglucosyl-enterobactin + UDP. It carries out the reaction monoglucosyl-enterobactin + UDP-alpha-D-glucose = diglucosyl-enterobactin + UDP + H(+). The catalysed reaction is diglucosyl-enterobactin + UDP-alpha-D-glucose = triglucosyl-enterobactin + UDP + H(+). It functions in the pathway siderophore biosynthesis; enterobactin biosynthesis. Catalyzes the successive monoglucosylation, diglucosylation and triglucosylation of enterobactin (Ent). Transfers glucosyl groups from uridine-5'-diphosphoglucose (UDP-Glc) to C5 of one, two or three of the 2,3-dihydroxybenzoyl (DHB) units of Ent to yield monoglucosyl-C-Ent (MGE), diglucosyl-C-Ent (DGE) and triglucosyl-C-Ent (TGE). Glucosylation decreases the membrane affinity of Ent and increases the iron acquisition rate. The protein is Enterobactin C-glucosyltransferase of Escherichia coli O6:H1 (strain CFT073 / ATCC 700928 / UPEC).